The chain runs to 295 residues: Tyrosine recombinase XerC (295 aa).

The Core-binding (CB) domain maps to 1–85; sequence MLTALNRYWD…ALRRFLSFLV (85 aa). A Tyr recombinase domain is found at 106–285; sequence HLPKNMDGEQ…NFQHLAEVYD (180 aa). Residues R145, K169, H237, R240, and H263 contribute to the active site. Residue Y272 is the O-(3'-phospho-DNA)-tyrosine intermediate of the active site.

Belongs to the 'phage' integrase family. XerC subfamily. Forms a cyclic heterotetrameric complex composed of two molecules of XerC and two molecules of XerD.

It is found in the cytoplasm. Functionally, site-specific tyrosine recombinase, which acts by catalyzing the cutting and rejoining of the recombining DNA molecules. The XerC-XerD complex is essential to convert dimers of the bacterial chromosome into monomers to permit their segregation at cell division. It also contributes to the segregational stability of plasmids. The sequence is that of Tyrosine recombinase XerC from Haemophilus influenzae (strain 86-028NP).